Reading from the N-terminus, the 71-residue chain is MKKTFYHYMMKHRAALFSNEISNLAEAMYDDLSFPKQSEDYDEISSYLELSGMLESMSIFDEAWDLYIQDR.

It belongs to the UPF0346 family.

This is UPF0346 protein BCQ_2236 from Bacillus cereus (strain Q1).